The primary structure comprises 404 residues: Floricaula/leafy-like protein FL1 (404 aa).

The segment at 210–251 (IGVPEHSSESDERKADTNKQKRRRSKEPGEDGEDRPREHPFI) is disordered. Composition is skewed to basic and acidic residues over residues 215-228 (HSSE…DTNK) and 235-249 (KEPG…REHP). DNA-binding regions lie at residues 246-250 (REHPF), 315-322 (NKPKMRHY), and 386-389 (YVPT).

Belongs to the FLO/LFY family. Expressed in both male and female cones, vegetative buds and needles, but not in the roots.

The protein resides in the nucleus. In terms of biological role, probable transcription factor. This is Floricaula/leafy-like protein FL1 from Pinus radiata (Monterey pine).